Reading from the N-terminus, the 274-residue chain is Dermonecrotic toxin SdSicTox-betaIIB1bxiii (274 aa).

Histidine 5 is a catalytic residue. The Mg(2+) site is built by glutamate 25 and aspartate 27. Residue histidine 41 is the Nucleophile of the active site. 2 cysteine pairs are disulfide-bonded: cysteine 45/cysteine 51 and cysteine 47/cysteine 190. Residue aspartate 85 participates in Mg(2+) binding.

This sequence belongs to the arthropod phospholipase D family. Class II subfamily. It depends on Mg(2+) as a cofactor. As to expression, expressed by the venom gland.

The protein localises to the secreted. It catalyses the reaction an N-(acyl)-sphingosylphosphocholine = an N-(acyl)-sphingosyl-1,3-cyclic phosphate + choline. The enzyme catalyses an N-(acyl)-sphingosylphosphoethanolamine = an N-(acyl)-sphingosyl-1,3-cyclic phosphate + ethanolamine. The catalysed reaction is a 1-acyl-sn-glycero-3-phosphocholine = a 1-acyl-sn-glycero-2,3-cyclic phosphate + choline. It carries out the reaction a 1-acyl-sn-glycero-3-phosphoethanolamine = a 1-acyl-sn-glycero-2,3-cyclic phosphate + ethanolamine. Dermonecrotic toxins cleave the phosphodiester linkage between the phosphate and headgroup of certain phospholipids (sphingolipid and lysolipid substrates), forming an alcohol (often choline) and a cyclic phosphate. This toxin acts on sphingomyelin (SM). It may also act on ceramide phosphoethanolamine (CPE), lysophosphatidylcholine (LPC) and lysophosphatidylethanolamine (LPE), but not on lysophosphatidylserine (LPS), and lysophosphatidylglycerol (LPG). It acts by transphosphatidylation, releasing exclusively cyclic phosphate products as second products. Induces dermonecrosis, hemolysis, increased vascular permeability, edema, inflammatory response, and platelet aggregation. This Sicarius cf. damarensis (strain GJB-2008) (Six-eyed sand spider) protein is Dermonecrotic toxin SdSicTox-betaIIB1bxiii.